The chain runs to 544 residues: Probable protein kinase UbiB (544 aa).

A Protein kinase domain is found at 123–501; that stretch reads DFDIKPLASA…KRQQAKGQFL (379 aa). Residues 129–137 and Lys152 contribute to the ATP site; that span reads LASASIAQV. Catalysis depends on Asp287, which acts as the Proton acceptor. Residues 515-537 traverse the membrane as a helical segment; sequence LLTSNITVLASISAATGAAFWLF.

Belongs to the ABC1 family. UbiB subfamily.

The protein resides in the cell inner membrane. Its pathway is cofactor biosynthesis; ubiquinone biosynthesis [regulation]. Is probably a protein kinase regulator of UbiI activity which is involved in aerobic coenzyme Q (ubiquinone) biosynthesis. This is Probable protein kinase UbiB from Aliivibrio fischeri (strain ATCC 700601 / ES114) (Vibrio fischeri).